Consider the following 420-residue polypeptide: Annetocin receptor (420 aa).

Topologically, residues 1-54 (MEMDDDEAILLDDIYALASTPNQTIVTSSFPQTVSPGFLARRNEALAMVEVAVQ) are extracellular. N-linked (GlcNAc...) asparagine glycosylation is present at Asn-22. The helical transmembrane segment at 55–75 (STILILTVVGNAAVLAMIVSL) threads the bilayer. The Cytoplasmic segment spans residues 76–83 (SRHKDLGR). A helical membrane pass occupies residues 84–104 (MYTMIGHLSCADLFVAIFNLL). Residues 105–124 (PQLLWDVTHRFRGGRVLCKL) are Extracellular-facing. Cys-122 and Cys-201 form a disulfide bridge. Residues 125–145 (VKYVQVVAMYASAYVLMSTAV) traverse the membrane as a helical segment. Residues 146–166 (DRYTAICHPMRSHTWTSTTAH) lie on the Cytoplasmic side of the membrane. The helical transmembrane segment at 167–187 (YLVIGAWVLALVFAVPQLVIF) threads the bilayer. The Extracellular segment spans residues 188–212 (DYVEVVPGSGVYDCVDHFRPRWTLP). Residues 213-233 (VYITWFALAVYVIPLVVLATI) form a helical membrane-spanning segment. The Cytoplasmic segment spans residues 234–328 (YLRICVVVWK…KTKTVKLTLT (95 aa)). Residues 329 to 349 (VVISYLVCWAPFFVSHIWSAW) form a helical membrane-spanning segment. Over 350-360 (DPHAPFEGTEM) the chain is Extracellular. Residues 361–381 (VITLLLGSLNSCINPWIYLAF) form a helical membrane-spanning segment. Residues 382–420 (SDQLRRKVTQCCPRSWGQRPSTLSHDSTDFRSGSRPTHS) lie on the Cytoplasmic side of the membrane. The disordered stretch occupies residues 397–420 (WGQRPSTLSHDSTDFRSGSRPTHS). Polar residues predominate over residues 399–420 (QRPSTLSHDSTDFRSGSRPTHS).

The protein belongs to the G-protein coupled receptor 1 family. Vasopressin/oxytocin receptor subfamily. Nephridia in clitellum region.

It is found in the cell membrane. Receptor for annetocin. Activation by annetocin may induce egg-laying behavior through calcium-dependent signaling. This Eisenia fetida (Red wiggler worm) protein is Annetocin receptor.